The following is a 92-amino-acid chain: Signal recognition particle 19 kDa protein (92 aa).

The protein belongs to the SRP19 family. In terms of assembly, part of the signal recognition particle protein translocation system, which is composed of SRP and FtsY. Archaeal SRP consists of a 7S RNA molecule of 300 nucleotides and two protein subunits: SRP54 and SRP19.

The protein localises to the cytoplasm. Involved in targeting and insertion of nascent membrane proteins into the cytoplasmic membrane. Binds directly to 7S RNA and mediates binding of the 54 kDa subunit of the SRP. In Haloferax volcanii (strain ATCC 29605 / DSM 3757 / JCM 8879 / NBRC 14742 / NCIMB 2012 / VKM B-1768 / DS2) (Halobacterium volcanii), this protein is Signal recognition particle 19 kDa protein.